A 274-amino-acid chain; its full sequence is Large ribosomal subunit protein uL2 (274 aa).

A disordered region spans residues 221 to 274 (RGTAMNPVDHPHGGGEGKNFGKHPVTPWGVQTKGKKTRSNKRTDKFIVRRRSKK).

It belongs to the universal ribosomal protein uL2 family. In terms of assembly, part of the 50S ribosomal subunit. Forms a bridge to the 30S subunit in the 70S ribosome.

Functionally, one of the primary rRNA binding proteins. Required for association of the 30S and 50S subunits to form the 70S ribosome, for tRNA binding and peptide bond formation. It has been suggested to have peptidyltransferase activity; this is somewhat controversial. Makes several contacts with the 16S rRNA in the 70S ribosome. This is Large ribosomal subunit protein uL2 from Serratia proteamaculans (strain 568).